The following is a 1116-amino-acid chain: Protein STICHEL-like 1 (1116 aa).

Disordered regions lie at residues 95–138 (RTSS…LEET) and 225–244 (KFLRGTSKREDSSHTCNSTP). Over residues 115-124 (NDDDDDDDDV) the composition is skewed to acidic residues. 2 consecutive short sequence motifs (PEST) follow at residues 257–282 (RNPSTVGSWEDGDDELDDDNLDFKGR) and 402–422 (KSQDGEREEEEEGGSTPESIQ). 463 to 470 (GPRGTGKT) serves as a coordination point for ATP. Residues Cys-482, Cys-492, Cys-495, and Cys-498 each coordinate Zn(2+). The stretch at 726–760 (EAFLDRRNLTEADLERLKHALKLLSEAEKQLRVST) forms a coiled coil. Residues 777 to 798 (PSPGTTHTGSSRRQSSRATEES) are disordered. Residues 778 to 793 (SPGTTHTGSSRRQSSR) show a composition bias toward polar residues.

Belongs to the DnaX/STICHEL family.

The protein is Protein STICHEL-like 1 of Arabidopsis thaliana (Mouse-ear cress).